The sequence spans 145 residues: uncharacterized protein (145 aa).

The signal sequence occupies residues 1-22 (MLTRLVLSAHLSSTTSPPWTHA). Asn98 carries N-linked (GlcNAc...) asparagine glycosylation. The segment at 103 to 145 (SSGQQRQAARQEEENSICKAHDSREGRLGYPLSAHQPGSGGPN) is disordered.

Its subcellular location is the secreted. This is an uncharacterized protein from Homo sapiens (Human).